Here is a 798-residue protein sequence, read N- to C-terminus: Cold shock domain-containing protein E1 (798 aa).

Positions 26–87 (ETGVIEKLLT…RTGKPIAIKL (62 aa)) constitute a CSD 1 domain. An N6-acetyllysine modification is found at Lys-81. Residue Lys-91 forms a Glycyl lysine isopeptide (Lys-Gly) (interchain with G-Cter in SUMO2) linkage. Ser-123 carries the phosphoserine modification. One can recognise a CSD 2; truncated domain in the interval 136–179 (VFYLTYTSEDVEGNVQLETGDKINFVIDNNKHTGAVSARNIMLL). Residues 186–245 (CQGVVCAMKEAFGFIERGDVVKEIFFHYSEFKGDLETLQPGDDVEFTIKDRNGKEVATDV) enclose the CSD 3 domain. Ser-276 carries the post-translational modification Phosphoserine. Residues 297-337 (LPFGDKDTKSKVTLLEGDHVRFNISTDRRDKLERATNIEVL) enclose the CSD 4; truncated domain. CSD domains lie at 349-410 (EMGV…AIRI) and 447-507 (NKGK…ATCV). The residue at position 514 (Ser-514) is a Phosphoserine. The region spanning 519-579 (LLGYVATLKD…KGNKVSAEKV (61 aa)) is the CSD 7 domain. Ser-584 carries the phosphoserine modification. CSD domains lie at 610–670 (PTQI…AYNI) and 674–735 (RRAT…ACNV). The 42-residue stretch at 748–789 (PRPDRLVNRLKNITLDDASAPRLMVLRQPRGPDNSMGFGAER) folds into the SUZ-C domain. Thr-761 bears the Phosphothreonine mark.

Belongs to the UNR family. In terms of assembly, component of a multi subunit autoregulatory ribonucleoprotein complex (ARC), at least composed of IGF2BP1, PABPC1 and CSDE1. Interacts with STRAP. Part of a complex associated with the FOS mCRD domain and consisting of PABPC1, PAIP1, HNRPD and SYNCRIP. The interaction with PABPC1 is direct and RNA-independent. Interacts with EIF4ENIF1/4E-T.

Its subcellular location is the cytoplasm. It is found in the stress granule. The protein resides in the P-body. Functionally, RNA-binding protein involved in translationally coupled mRNA turnover. Implicated with other RNA-binding proteins in the cytoplasmic deadenylation/translational and decay interplay of the FOS mRNA mediated by the major coding-region determinant of instability (mCRD) domain. Required for efficient formation of stress granules. The chain is Cold shock domain-containing protein E1 from Mus musculus (Mouse).